We begin with the raw amino-acid sequence, 548 residues long: (S)-beta-macrocarpene synthase (548 aa).

2 residues coordinate Mg(2+): D302 and D306. Substrate contacts are provided by D302, D306, R443, and N446. A DDXXD motif motif is present at residues 302 to 306 (DDTLD). Mg(2+)-binding residues include N446, S450, and E454.

The protein belongs to the terpene synthase family. Monomer. Mg(2+) serves as cofactor. Requires Mn(2+) as cofactor. Expressed in roots. Not detected in leaves, unless damaged by herbivory or infected by fungi.

The protein localises to the cytoplasm. It catalyses the reaction (S)-beta-bisabolene = (S)-beta-macrocarpene. It carries out the reaction (2E,6E)-farnesyl diphosphate = (S)-beta-bisabolene + diphosphate. The enzyme catalyses (2E)-geranyl diphosphate = (4S)-limonene + diphosphate. The catalysed reaction is (2E)-geranyl diphosphate = beta-myrcene + diphosphate. It catalyses the reaction (2E)-geranyl diphosphate = terpinolene + diphosphate. It carries out the reaction (2E)-geranyl diphosphate + H2O = (S)-linalool + diphosphate. It participates in secondary metabolite biosynthesis; terpenoid biosynthesis. Functionally, involved in the biosynthesis of the bicyclic sesquiterpene (S)-beta-macrocarpene. Can use both geranyl diphosphate and farnesyl diphosphate as substrate, but not geranylgeranyl diphosphate. Produces mainly (S)-beta-macrocarpene, but also smaller amounts of beta-bisabolene and (E)-beta-farnesene when used with farnesyl diphosphate as substrate. In the presence of geranyl diphosphate, produces the acyclic monoterpenes beta-myrcene and linalool along with minor amounts of the cyclic compounds limonene, alpha-thujene, sabinene and alpha-terpinolene. May be involved in plant defense. This chain is (S)-beta-macrocarpene synthase, found in Zea mays (Maize).